The chain runs to 365 residues: Medium chain reductase pydE (365 aa).

Positions 21-362 constitute an Enoyl reductase (ER) domain; the sequence is KLIDSLPVPP…SKRARGKVLI (342 aa). NADP(+) contacts are provided by residues 185-188, Tyr-226, 274-275, and 354-355; these read SGSV, IG, and KR.

The protein belongs to the zinc-containing alcohol dehydrogenase family. As to quaternary structure, monomer.

The protein operates within mycotoxin biosynthesis. Medium chain reductase; part of the gene cluster that mediates the biosynthesis of pyrrocidines, fungal natural products containing a macrocyclic para-cyclophane connected to a decahydrofluorene ring system that show potent antibiotic activities toward Gram-negative bacteria. Within the pathway, pydE functions synergistically with pydB, pydX and pydZ to form the cyclophane. The pathway begins with the PKS-NRPS pydA which, with the help of the trans-enoyl reductase pydC, synthesizes the polyketide-tyrosyl acyl thioester product which can be reductively off-loaded by the terminal reductase (R) domain in pydA. The alpha/beta hydrolase pydG is then required to catalyze the subsequent Knoevenagel condensation that affords the 3-pyrrolin-2-one ring, whereas the four proteins pydB, pydE, pydX and pydZ then function synergistically to form the cyclophane. PydB and the membrane-bound pydX and pydZ are lipid-binding proteins that can sequester and mold the pdyG product into the inverse S-shape. Binding of the medium chain reductase pydE to the complex would trigger the cascade oxidative cyclization. PydY is involved in the Diels-Alder cycloaddition that forms the decahydrofluorene core. Additional non-enzymatic hydroxylation yields pyrrocidine A2 which can be further reduced into pyrrocidine B by an endogenous reductase. The protein is Medium chain reductase pydE of Acremonium sp.